Consider the following 473-residue polypeptide: Iron transporter SMF3 (473 aa).

The next 2 helical transmembrane spans lie at 14–34 (FIGP…YATS) and 44–64 (TLLF…CLCV). A glycan (N-linked (GlcNAc...) asparagine) is linked at N87. 9 helical membrane passes run 97–117 (AIIA…QILF), 119–139 (IPLT…LMFY), 152–172 (FEFG…LELF), 198–218 (ALYI…LYLG), 257–277 (LIIS…IVAG), 297–317 (LLVH…MLCS), 352–372 (LIAI…GISD), 373–393 (ILNF…APLI), and 448–468 (VFVW…YLLG).

Belongs to the NRAMP family.

It is found in the vacuole membrane. It localises to the endoplasmic reticulum membrane. Has a role in controlling the cellular iron ion levels. Mobilizes vacuolar stores of iron in conditions of low iron levels. This chain is Iron transporter SMF3 (SMF3), found in Saccharomyces cerevisiae (strain ATCC 204508 / S288c) (Baker's yeast).